Reading from the N-terminus, the 208-residue chain is MIGLVGKKLGMTRIFFEEYTSIPVTAIEILDNIVVQVKTIENDNYESIQLTTGFKKEKKVLKSEYGHFLKFNVSVGRGLWEFKCKNSSNYSSGQKITINFFKNIKKLDITGISKGKGFAGTVKRWNFRMQDATHGNSLSHRVPGSIGQNQTPGHVFKGKKMSGHLGDQRTTIQNLKIVKIDDINKIILIKGSIPGSIGSDILLKPSIK.

Gln150 is subject to N5-methylglutamine.

It belongs to the universal ribosomal protein uL3 family. As to quaternary structure, part of the 50S ribosomal subunit. Forms a cluster with proteins L14 and L19. Post-translationally, methylated by PrmB.

Functionally, one of the primary rRNA binding proteins, it binds directly near the 3'-end of the 23S rRNA, where it nucleates assembly of the 50S subunit. The polypeptide is Large ribosomal subunit protein uL3 (Buchnera aphidicola subsp. Cinara cedri (strain Cc)).